The following is an 85-amino-acid chain: Small ribosomal subunit protein uS17 (85 aa).

Belongs to the universal ribosomal protein uS17 family. Part of the 30S ribosomal subunit.

In terms of biological role, one of the primary rRNA binding proteins, it binds specifically to the 5'-end of 16S ribosomal RNA. The polypeptide is Small ribosomal subunit protein uS17 (Pseudoalteromonas translucida (strain TAC 125)).